The primary structure comprises 82 residues: Turripeptide Gsp9.2 (82 aa).

The signal sequence occupies residues 1 to 23; it reads MMAKLMITVMMVLLLSLQQGADG. Positions 24–46 are excised as a propeptide; the sequence is RSERWRKNQMAASSIMRNLITAR. 4-hydroxyproline is present on residues P49 and P50. Disulfide bonds link C53-C68, C58-C72, and C64-C79. E56 is subject to 4-carboxyglutamate.

It belongs to the Pg turripeptide superfamily. As to expression, expressed by the venom duct.

It localises to the secreted. The protein is Turripeptide Gsp9.2 of Gemmula speciosa (Splendid gem-turris).